A 5161-amino-acid chain; its full sequence is Nonribosomal peptide synthetase TES (5161 aa).

An adenylation 1 region spans residues 37–436 (EEQAIARPNA…GRKDSQTKVR (400 aa)). In terms of domain architecture, Carrier 1 spans 569-645 (QPETEKEQIL…KLTSAAIPSV (77 aa)). At serine 606 the chain carries O-(pantetheine 4'-phosphoryl)serine. The condensation 1 stretch occupies residues 659–1098 (GHVAQSFAQG…LLCDVELSKL (440 aa)). Positions 1122 to 1522 (RQQTSLCPSR…GRMDGQVKIR (401 aa)) are adenylation 2. Residues 1630–1742 (MNEWLDDTID…YLFKTTQQLL (113 aa)) form a methyltransferase (M) domain 1 region. The region spanning 2068–2141 (TRAESKIQQL…QLAAVAQEHV (74 aa)) is the Carrier 2 domain. Serine 2102 is modified (O-(pantetheine 4'-phosphoryl)serine). The segment at 2179–2593 (EDIYPCSPLQ…MLTQDDEQQL (415 aa)) is condensation 2. Positions 2614-3010 (DQAKSRPEAD…GRKDGQVKVR (397 aa)) are adenylation 3. The Carrier 3 domain maps to 3139 to 3215 (KPETKHEMAL…RLANRLVDPP (77 aa)). Serine 3176 carries the O-(pantetheine 4'-phosphoryl)serine modification. The interval 3232–3668 (LQSFAQGRLW…VVPLMTVEAH (437 aa)) is condensation 3. The tract at residues 3694-4098 (FRQQAAMQPS…GRIDGQVKIR (405 aa)) is adenylation 4. Residues 4203 to 4329 (EMKEWLEETI…KVDGVKTLFF (127 aa)) are methyltransferase (M) domain 2. The region spanning 4643 to 4725 (RELSTAELKV…QFSQHEGEQK (83 aa)) is the Carrier 4 domain. O-(pantetheine 4'-phosphoryl)serine is present on serine 4680. The interval 4785–5093 (FFLNLGTRVD…HQNLNEHPEF (309 aa)) is condensation 4.

Belongs to the NRP synthetase family.

The protein operates within phytotoxin biosynthesis. Nonribosomal peptide synthetase; part of the gene cluster that mediates the biosynthesis of the phytotoxin tentoxin, an inhibitor the F1-ATPase activity of chloroplasts, resulting in chlorosis in sensitive plants. Tentoxin is a cyclic tetrapeptide that consists of four amino acid residues: glycine (Gly), alanine (Ala), leucine (Leu), and dehydrophenylalanine (DPhe). In addition, both the Ala and DPhe residues are N-methylated. The nonribosomal peptide synthetase TES assembles tentoxin from the four substrate amino acids. The adenylation domains of each of the 4 modules are responsible for the activation of Gly, Ala, Leu and DPhe, respectively. In addition, the N-methyltransferase domains in the second and fourth modules of TES could be responsible for N-methylation of Ala and DPhe residues. Finally, the condensation domain located in the termination module probably catalyzes the formation of the intramolecular macrocyclization and then the release of tentoxin. The cytochrome P450 monooxygenase TES1 is predicted to be involved in the formation of DPhe. This chain is Nonribosomal peptide synthetase TES, found in Alternaria alternata (Alternaria rot fungus).